Reading from the N-terminus, the 247-residue chain is 23S rRNA (guanosine-2'-O-)-methyltransferase RlmB (247 aa).

S-adenosyl-L-methionine-binding residues include G197, I217, and L226.

The protein belongs to the class IV-like SAM-binding methyltransferase superfamily. RNA methyltransferase TrmH family. RlmB subfamily.

It is found in the cytoplasm. It catalyses the reaction guanosine(2251) in 23S rRNA + S-adenosyl-L-methionine = 2'-O-methylguanosine(2251) in 23S rRNA + S-adenosyl-L-homocysteine + H(+). Specifically methylates the ribose of guanosine 2251 in 23S rRNA. This Vibrio parahaemolyticus serotype O3:K6 (strain RIMD 2210633) protein is 23S rRNA (guanosine-2'-O-)-methyltransferase RlmB.